The sequence spans 312 residues: Methionyl-tRNA formyltransferase (312 aa).

110–113 (SLLP) contacts (6S)-5,6,7,8-tetrahydrofolate.

Belongs to the Fmt family.

The enzyme catalyses L-methionyl-tRNA(fMet) + (6R)-10-formyltetrahydrofolate = N-formyl-L-methionyl-tRNA(fMet) + (6S)-5,6,7,8-tetrahydrofolate + H(+). Its function is as follows. Attaches a formyl group to the free amino group of methionyl-tRNA(fMet). The formyl group appears to play a dual role in the initiator identity of N-formylmethionyl-tRNA by promoting its recognition by IF2 and preventing the misappropriation of this tRNA by the elongation apparatus. The polypeptide is Methionyl-tRNA formyltransferase (Koribacter versatilis (strain Ellin345)).